We begin with the raw amino-acid sequence, 557 residues long: Polypyrimidine tract-binding protein 1 (557 aa).

Methionine 1 is modified (N-acetylmethionine). Serine 16 carries the post-translational modification Phosphoserine. 3 consecutive RRM domains span residues 59-143 (RVIH…SSPN), 184-260 (LRII…FSKL), and 363-437 (SVLL…LSKH). Residue lysine 65 forms a Glycyl lysine isopeptide (Lys-Gly) (interchain with G-Cter in SUMO2) linkage. Tyrosine 127 carries the post-translational modification Phosphotyrosine. Threonine 138 carries the phosphothreonine modification. Residue serine 141 is modified to Phosphoserine. Lysine 218 participates in a covalent cross-link: Glycyl lysine isopeptide (Lys-Gly) (interchain with G-Cter in SUMO2). Serine 459 is modified (phosphoserine). The 76-residue stretch at 480–555 (ATLHLSNIPP…HHLRVSFSKS (76 aa)) folds into the RRM 4 domain.

As to quaternary structure, monomer. Part of a ternary complex containing KHSRP, PTBP1, PTBP2 and HNRPH1. Interacts with RAVER1 and SFPQ.

The protein localises to the nucleus. Its function is as follows. Plays a role in pre-mRNA splicing and in the regulation of alternative splicing events. Activates exon skipping of its own pre-mRNA during muscle cell differentiation. Binds to the polypyrimidine tract of introns. May promote RNA looping when bound to two separate polypyrimidine tracts in the same pre-mRNA. May promote the binding of U2 snRNP to pre-mRNA. Cooperates with RAVER1 to modulate switching between mutually exclusive exons during maturation of the TPM1 pre-mRNA. Represses the splicing of MAPT/Tau exon 10. Binds to polypyrimidine-rich controlling element (PCE) of CFTR and promotes exon skipping of CFTR exon 9, thereby antagonizing TIA1 and its role in exon inclusion of CFTR exon 9. Plays a role in the splicing of pyruvate kinase PKM by binding repressively to a polypyrimidine tract flanking PKM exon 9, inhibiting exon 9 inclusion and resulting in exon 10 inclusion and production of the PKM M2 isoform. This Sus scrofa (Pig) protein is Polypyrimidine tract-binding protein 1 (PTBP1).